The primary structure comprises 282 residues: 4-diphosphocytidyl-2-C-methyl-D-erythritol kinase (282 aa).

Residue K11 is part of the active site. 93–103 lines the ATP pocket; it reads LVSAGLAGGSA. D133 is a catalytic residue.

The protein belongs to the GHMP kinase family. IspE subfamily.

The catalysed reaction is 4-CDP-2-C-methyl-D-erythritol + ATP = 4-CDP-2-C-methyl-D-erythritol 2-phosphate + ADP + H(+). It participates in isoprenoid biosynthesis; isopentenyl diphosphate biosynthesis via DXP pathway; isopentenyl diphosphate from 1-deoxy-D-xylulose 5-phosphate: step 3/6. Catalyzes the phosphorylation of the position 2 hydroxy group of 4-diphosphocytidyl-2C-methyl-D-erythritol. The protein is 4-diphosphocytidyl-2-C-methyl-D-erythritol kinase of Ehrlichia canis (strain Jake).